Consider the following 276-residue polypeptide: Exosome complex component RRP43 (276 aa).

Residue Ala-2 is modified to N-acetylalanine.

The protein belongs to the RNase PH family. In terms of assembly, component of the RNA exosome core complex (Exo-9), composed of EXOSC1, EXOSC2, EXOSC3, EXOSC4, EXOSC5, EXOSC6, EXOSC7, EXOSC8 and EXOSC9; within the complex interacts with EXOSC5 and EXOSC6. The catalytically inactive RNA exosome core complex (Exo-9) associates with the catalytic subunit EXOSC10/RRP6. Exo-9 may associate with DIS3 to form the nucleolar exosome complex, or DIS3L to form the cytoplasmic exosome complex. Exo-9 is formed by a hexameric base ring consisting of the heterodimers EXOSC4-EXOSC9, EXOSC5-EXOSC8 and EXOSC6-EXOSC7, and a cap ring consisting of EXOSC1, EXOSC2 and EXOSC3. The RNA exosome complex associates with cofactors C1D/RRP47, MPHOSPH6/MPP6 and MTREX/MTR4.

It localises to the cytoplasm. Its subcellular location is the nucleus. It is found in the nucleolus. Functionally, non-catalytic component of the RNA exosome complex which has 3'-&gt;5' exoribonuclease activity and participates in a multitude of cellular RNA processing and degradation events. In the nucleus, the RNA exosome complex is involved in proper maturation of stable RNA species such as rRNA, snRNA and snoRNA, in the elimination of RNA processing by-products and non-coding 'pervasive' transcripts, such as antisense RNA species and promoter-upstream transcripts (PROMPTs), and of mRNAs with processing defects, thereby limiting or excluding their export to the cytoplasm. The RNA exosome may be involved in Ig class switch recombination (CSR) and/or Ig variable region somatic hypermutation (SHM) by targeting AICDA deamination activity to transcribed dsDNA substrates. In the cytoplasm, the RNA exosome complex is involved in general mRNA turnover and specifically degrades inherently unstable mRNAs containing AU-rich elements (AREs) within their 3' untranslated regions, and in RNA surveillance pathways, preventing translation of aberrant mRNAs. It seems to be involved in degradation of histone mRNA. The catalytic inactive RNA exosome core complex of 9 subunits (Exo-9) is proposed to play a pivotal role in the binding and presentation of RNA for ribonucleolysis, and to serve as a scaffold for the association with catalytic subunits and accessory proteins or complexes. EXOSC8 binds to ARE-containing RNAs. In Mus musculus (Mouse), this protein is Exosome complex component RRP43 (Exosc8).